Here is a 143-residue protein sequence, read N- to C-terminus: Small ribosomal subunit protein uS12 (143 aa).

Residues 1-15 (MGKCRGLRTARKLRD) show a composition bias toward basic residues. Residues 1-27 (MGKCRGLRTARKLRDHRREQKWHDKQY) are disordered. Positions 16-27 (HRREQKWHDKQY) are enriched in basic and acidic residues.

This sequence belongs to the universal ribosomal protein uS12 family. As to quaternary structure, component of the 40S small ribosomal subunit.

Its subcellular location is the cytoplasm. The protein localises to the cytosol. The protein resides in the rough endoplasmic reticulum. The protein is Small ribosomal subunit protein uS12 (rps23) of Ictalurus punctatus (Channel catfish).